The chain runs to 198 residues: Holliday junction resolvase RecU (198 aa).

The interval 1–29 (MIRYPNGKSYQPKTAASSLQKKPSYSNRG) is disordered. Polar residues predominate over residues 8–29 (KSYQPKTAASSLQKKPSYSNRG). Residues threonine 83, aspartate 85, glutamate 98, and glutamine 117 each contribute to the Mg(2+) site.

It belongs to the RecU family. Requires Mg(2+) as cofactor.

It is found in the cytoplasm. The enzyme catalyses Endonucleolytic cleavage at a junction such as a reciprocal single-stranded crossover between two homologous DNA duplexes (Holliday junction).. Its function is as follows. Endonuclease that resolves Holliday junction intermediates in genetic recombination. Cleaves mobile four-strand junctions by introducing symmetrical nicks in paired strands. Promotes annealing of linear ssDNA with homologous dsDNA. Required for DNA repair, homologous recombination and chromosome segregation. This is Holliday junction resolvase RecU from Bacillus licheniformis (strain ATCC 14580 / DSM 13 / JCM 2505 / CCUG 7422 / NBRC 12200 / NCIMB 9375 / NCTC 10341 / NRRL NRS-1264 / Gibson 46).